Here is a 237-residue protein sequence, read N- to C-terminus: Uracil-DNA glycosylase (237 aa).

Aspartate 77 acts as the Proton acceptor in catalysis.

Belongs to the uracil-DNA glycosylase (UDG) superfamily. UNG family.

It is found in the cytoplasm. The enzyme catalyses Hydrolyzes single-stranded DNA or mismatched double-stranded DNA and polynucleotides, releasing free uracil.. Excises uracil residues from the DNA which can arise as a result of misincorporation of dUMP residues by DNA polymerase or due to deamination of cytosine. The sequence is that of Uracil-DNA glycosylase from Acinetobacter baumannii (strain AB307-0294).